The primary structure comprises 100 residues: Probable antitoxin MazE4 (100 aa).

Positions 77 to 100 (PYESEAERSAARARRNARQQRSAQ) are disordered.

In terms of assembly, forms a complex with cognate toxin MazF4.

Functionally, antitoxin component of a type II toxin-antitoxin (TA) system. Labile antitoxin that binds to cognate MazF4 toxin and counteracts its endoribonuclease activity. This is Probable antitoxin MazE4 (mazE4) from Mycobacterium tuberculosis (strain CDC 1551 / Oshkosh).